The sequence spans 147 residues: D(1B) dopamine receptor (147 aa).

A helical membrane pass occupies residues 1–12 (SILISFPVQLNW). The Extracellular segment spans residues 13–55 (HRDQAGSWGGLDLTNNLANWTPWEEDVWEPDVRAENCDSSLNR). A glycan (N-linked (GlcNAc...) asparagine) is linked at Asn-54. Residues 56–78 (TYAISSSLVSFYIPVAIMIVTYT) traverse the membrane as a helical segment. Residues 79 to 128 (RIYRIAQVQIRRISSLERAAEHAQSCRSSAACAPDTSLRASIKKETKVLK) lie on the Cytoplasmic side of the membrane. Residues 129–147 (TLSVIMGVFVCCWLPFFIL) form a helical membrane-spanning segment.

This sequence belongs to the G-protein coupled receptor 1 family.

It is found in the cell membrane. Its function is as follows. Dopamine receptor whose activity is mediated by G proteins which activate adenylyl cyclase. The sequence is that of D(1B) dopamine receptor (DRD5) from Macaca mulatta (Rhesus macaque).